We begin with the raw amino-acid sequence, 376 residues long: Succinyl-diaminopimelate desuccinylase (376 aa).

A Zn(2+)-binding site is contributed by H66. Residue D68 is part of the active site. Residue D99 coordinates Zn(2+). Residue E133 is the Proton acceptor of the active site. Zn(2+)-binding residues include E134, E162, and H348.

It belongs to the peptidase M20A family. DapE subfamily. As to quaternary structure, homodimer. Requires Zn(2+) as cofactor. Co(2+) is required as a cofactor.

It catalyses the reaction N-succinyl-(2S,6S)-2,6-diaminopimelate + H2O = (2S,6S)-2,6-diaminopimelate + succinate. The protein operates within amino-acid biosynthesis; L-lysine biosynthesis via DAP pathway; LL-2,6-diaminopimelate from (S)-tetrahydrodipicolinate (succinylase route): step 3/3. Its function is as follows. Catalyzes the hydrolysis of N-succinyl-L,L-diaminopimelic acid (SDAP), forming succinate and LL-2,6-diaminopimelate (DAP), an intermediate involved in the bacterial biosynthesis of lysine and meso-diaminopimelic acid, an essential component of bacterial cell walls. In Xanthomonas euvesicatoria pv. vesicatoria (strain 85-10) (Xanthomonas campestris pv. vesicatoria), this protein is Succinyl-diaminopimelate desuccinylase.